The primary structure comprises 137 residues: Small ribosomal subunit protein uS11 (137 aa).

Positions 1–11 (MAKQAKAGAAR) are enriched in low complexity. A disordered region spans residues 1–32 (MAKQAKAGAARRPQRGRRRERKNVPRGQAHVQ). Positions 12 to 21 (RPQRGRRRER) are enriched in basic residues.

Belongs to the universal ribosomal protein uS11 family. In terms of assembly, part of the 30S ribosomal subunit. Interacts with proteins S7 and S18. Binds to IF-3.

Its function is as follows. Located on the platform of the 30S subunit, it bridges several disparate RNA helices of the 16S rRNA. Forms part of the Shine-Dalgarno cleft in the 70S ribosome. This chain is Small ribosomal subunit protein uS11, found in Herpetosiphon aurantiacus (strain ATCC 23779 / DSM 785 / 114-95).